We begin with the raw amino-acid sequence, 105 residues long: uncharacterized protein (105 aa).

The tract at residues 1 to 27 is disordered; that stretch reads MQSPAMKRIKSSSHSRWDGSGSVNEMP.

The protein localises to the mitochondrion. This is an uncharacterized protein from Arabidopsis thaliana (Mouse-ear cress).